Here is a 491-residue protein sequence, read N- to C-terminus: MSETKRVRVRYAPSPTGFLHIGNARTALFNYLFARHNDGDFIIRIEDTDAKRNIADGEESQMTNLKWLGMDWDEGVDVPGKYGPYRQSERQSIYEPLIQQLLDEGLAYKCYCTEEELDAEREKQKANGEMPRYSGKCRHLTKEQQAEKEAQGFKPSIRFKVPANETITFNDMVKDDVSFESNGIGDFVIAKKDGIPTYNFAVAVDDHLMEISHVLRGDDHISNTPKQILIYNAFGWEPPIFGHMTLIVNESRRKLSKRDGSIIQFIEQYRDLGYLPEALFNFIAMLGWSPEGEEEIFSKEEFIKMFDPKRLSKSPALFDNVKLTWVNNQYVKKLPLNDVVELSLPHLQKAGVVSAELDQAELDWVHKLVSLYHEQMSYGAEIVPLSEMFFADAESITFDEEETAVLAEETVPTVISAFKKELEALEVLEAAEVKAAIKRVQKETGVKGKGLFMPIRIVTTGEMHGPELPLAIEVLGREKVLNRLDTWLKNN.

Residues 13 to 23 carry the 'HIGH' region motif; the sequence is PSPTGFLHIGN. The Zn(2+) site is built by Cys-110, Cys-112, Cys-137, and His-139. Residues 254 to 258 carry the 'KMSKS' region motif; it reads KLSKR. Lys-257 serves as a coordination point for ATP.

This sequence belongs to the class-I aminoacyl-tRNA synthetase family. Glutamate--tRNA ligase type 1 subfamily. In terms of assembly, monomer. Zn(2+) serves as cofactor.

It localises to the cytoplasm. The enzyme catalyses tRNA(Glu) + L-glutamate + ATP = L-glutamyl-tRNA(Glu) + AMP + diphosphate. Catalyzes the attachment of glutamate to tRNA(Glu) in a two-step reaction: glutamate is first activated by ATP to form Glu-AMP and then transferred to the acceptor end of tRNA(Glu). This is Glutamate--tRNA ligase from Listeria monocytogenes serotype 4b (strain F2365).